Consider the following 189-residue polypeptide: Interferon alpha-8 (189 aa).

The first 23 residues, M1–G23, serve as a signal peptide directing secretion. 2 disulfides stabilise this stretch: C24–C122 and C52–C162.

The protein belongs to the alpha/beta interferon family.

It is found in the secreted. Its function is as follows. Produced by macrophages, IFN-alpha have antiviral activities. Interferon stimulates the production of two enzymes: a protein kinase and an oligoadenylate synthetase. The sequence is that of Interferon alpha-8 (IFNA8) from Homo sapiens (Human).